Reading from the N-terminus, the 304-residue chain is GTPase Era (304 aa).

In terms of domain architecture, Era-type G spans 11–179 (YCGFIAIVGR…QKIVRKSLRE (169 aa)). Positions 19 to 26 (GRPNVGKS) are G1. Residue 19 to 26 (GRPNVGKS) participates in GTP binding. Residues 45–49 (QTTRH) form a G2 region. A G3 region spans residues 66 to 69 (DTPG). GTP-binding positions include 66–70 (DTPGL) and 128–131 (NKVD). Residues 128–131 (NKVD) form a G4 region. Residues 158 to 160 (ISA) form a G5 region. Residues 210–287 (TGEELPYSVT…HLELWVKVKA (78 aa)) form the KH type-2 domain.

It belongs to the TRAFAC class TrmE-Era-EngA-EngB-Septin-like GTPase superfamily. Era GTPase family. As to quaternary structure, monomer.

It is found in the cytoplasm. The protein resides in the cell inner membrane. In terms of biological role, an essential GTPase that binds both GDP and GTP, with rapid nucleotide exchange. Plays a role in 16S rRNA processing and 30S ribosomal subunit biogenesis and possibly also in cell cycle regulation and energy metabolism. In Actinobacillus pleuropneumoniae serotype 3 (strain JL03), this protein is GTPase Era.